The chain runs to 78 residues: Omega-conotoxin-like Ac6.5 (78 aa).

Residues 1–22 (MKLTCVVIVAVLLLTACQLLTA) form the signal peptide. A propeptide spanning residues 23-42 (DDSRGTQKHRSLRSTTKVSK) is cleaved from the precursor. Disulfide bonds link C46–C62, C53–C65, and C61–C72. Residues P55 and P67 each carry the 4-hydroxyproline modification.

This sequence belongs to the conotoxin O1 superfamily. As to expression, expressed by the venom duct.

The protein localises to the secreted. Its function is as follows. Omega-conotoxins act at presynaptic membranes, they bind and block voltage-gated calcium channels (Cav). In Conus achatinus (Little frog cone), this protein is Omega-conotoxin-like Ac6.5.